A 487-amino-acid chain; its full sequence is Glycogen synthase (487 aa).

ADP-alpha-D-glucose is bound at residue lysine 23.

Belongs to the glycosyltransferase 1 family. Bacterial/plant glycogen synthase subfamily.

The catalysed reaction is [(1-&gt;4)-alpha-D-glucosyl](n) + ADP-alpha-D-glucose = [(1-&gt;4)-alpha-D-glucosyl](n+1) + ADP + H(+). It participates in glycan biosynthesis; glycogen biosynthesis. Functionally, synthesizes alpha-1,4-glucan chains using ADP-glucose. This chain is Glycogen synthase, found in Pseudomonas fluorescens (strain Pf0-1).